The following is a 484-amino-acid chain: Aldehyde dehydrogenase family 3 member H1 (484 aa).

196–201 (GSSKIG) provides a ligand contact to NAD(+). Residue Glu218 is the Proton acceptor of the active site. Cys253 (nucleophile) is an active-site residue.

It belongs to the aldehyde dehydrogenase family. In terms of assembly, homodimer and homomultimer. In terms of tissue distribution, isoform alpha is expressed in expanded leaves and flowers. Detected in seedlings. Isoform beta is mainly expressed in flowers. Detected in leaves and seedlings.

It catalyses the reaction an aldehyde + NAD(+) + H2O = a carboxylate + NADH + 2 H(+). With respect to regulation, thiol-based regulation. Inactivation after dimerization under oxidizing conditions. Involved in oxidative stress tolerance by detoxifying reactive aldehydes derived from lipid peroxidation. Medium- to long-chain saturated aldehydes are preferred substrates, while the short-chain aldehyde propanal is a weak substrate. Is strictely NAD(+) specific. The sequence is that of Aldehyde dehydrogenase family 3 member H1 (ALDH3H1) from Arabidopsis thaliana (Mouse-ear cress).